A 144-amino-acid polypeptide reads, in one-letter code: Flagellar assembly factor FliW (144 aa).

Belongs to the FliW family. In terms of assembly, interacts with translational regulator CsrA and flagellin(s).

The protein localises to the cytoplasm. Its function is as follows. Acts as an anti-CsrA protein, binds CsrA and prevents it from repressing translation of its target genes, one of which is flagellin. Binds to flagellin and participates in the assembly of the flagellum. This is Flagellar assembly factor FliW from Geobacillus kaustophilus (strain HTA426).